The primary structure comprises 821 residues: MPTVISASMAPRTGASQVPRTMPQAAQGKGTEAGVGNPGGKYSAIISRNFPIIGVKEKTFEQLHKKCLEKKVLYLDPEFPPDETSLFYSQKFPIQFVWKRPPEICENPRFIIGGANRTDICQGDLGDCWFLAAIACLTLNKRLLFRVIPHDQSFTENYAGIFHFQFWRYGDWVDVVIDDCLPTYNNQLVFTKSNHRNEFWSALLEKAYAKLHGSYEALKGGNTTEAMEDFTGGVTEFFEIKDAPRDMYKIMKKAIERGSLMGCSIDDGTNMTYGTSPSGLKMGDLIARMVRNMDESRLRDSDLIPEGCSDDRPTRTIVPVQFETRMACGLVKGHAYSVTGLEEALFKGEKVKLVRLRNPWGQVEWNGSWSDSWKDWSFVDKDEKARLQHQVTEDGEFWMSYDDFIYHFTKLEICNLTADALESDKLQTWTVSVNEGRWVRGCSAGGCRNFPDTFWTNPQYRLKLLEEDDDPDDSEVICSFLVALMQKNRRKDRKLGANLFTIGFAIYEVPKEMHGNKQHLQKDFFLYNASKARSRTYINMREVSERFRLPPSEYVIVPSTYEPHQEGEFILRVFSEKRNLSEEVENTISVDRPVRKKKTKPIIFVSDRANSNKELGVDQESEEGQDKTSPDKQEKSPKPEPSNTDQESEEQQQFRNIFRQIAGDDMEICADELKNVLNRVVNKHKDLKTEGFTLESCRSMIALMDTDGSGRLNLQEFHHLWKKIKSWQKIFKHYDTDQSGTINSYEMRNAVNDAGFHLNNQLYDIITMRYADKYMNIDFDSFICCFVRLEGMFRAFNAFDKDGDGIIKLNVLEWLQLTMYA.

Positions 1 to 34 (MPTVISASMAPRTGASQVPRTMPQAAQGKGTEAG) are disordered. Residues 73–417 (LYLDPEFPPD…FTKLEICNLT (345 aa)) enclose the Calpain catalytic domain. Active-site residues include Cys-128, His-334, and Asn-358. Positions 418 to 586 (ADALESDKLQ…KRNLSEEVEN (169 aa)) are domain III. Residues 587 to 649 (TISVDRPVRK…EPSNTDQESE (63 aa)) are linker. Positions 603 to 652 (IFVSDRANSNKELGVDQESEEGQDKTSPDKQEKSPKPEPSNTDQESEEQQ) are disordered. Residues 624–638 (GQDKTSPDKQEKSPK) are compositionally biased toward basic and acidic residues. The span at 641 to 652 (PSNTDQESEEQQ) shows a compositional bias: polar residues. EF-hand domains lie at 649 to 683 (EEQQ…VVNK), 692 to 725 (FTLE…KKIK), 722 to 757 (KKIK…AGFH), and 787 to 821 (VRLE…TMYA). The interval 650-821 (EQQQFRNIFR…LEWLQLTMYA (172 aa)) is domain IV. The Ca(2+) site is built by Ala-662, Asp-665, Glu-667, Glu-672, Asp-705, Asp-707, Ser-709, Arg-711, Glu-716, Asp-735, Asp-737, Ser-739, Thr-741, Glu-746, Asp-800, Asp-802, Asp-804, and Ile-806.

Belongs to the peptidase C2 family. In terms of assembly, homodimer; via EF-hand domain 4. Interacts with TTN/titin. Interacts with CMYA5; this interaction, which results in CMYA5 proteolysis, may protect CAPN3 from autolysis. Interacts with SIMC1. Interacts with UTP25; the interaction is required for CAPN3 translocation to the nucleolus. Skeletal muscle.

The protein resides in the cytoplasm. It is found in the nucleus. Its subcellular location is the nucleolus. The enzyme catalyses Broad endopeptidase activity.. Activated by micromolar concentrations of calcium and inhibited by calpastatin. Its function is as follows. Calcium-regulated non-lysosomal thiol-protease. Proteolytically cleaves CTBP1. Mediates, with UTP25, the proteasome-independent degradation of p53/TP53. The chain is Calpain-3 (CAPN3) from Sus scrofa (Pig).